The chain runs to 337 residues: CMP-sialic acid transporter (337 aa).

The Cytoplasmic portion of the chain corresponds to 1–9 (MAAPRDNVT). The chain crosses the membrane as a helical span at residues 10-30 (LLFKLYCLAVMTLMAAVYTIA). Residues 31–45 (LRYTRTSDKELYFST) are Lumenal-facing. The chain crosses the membrane as a helical span at residues 46–64 (TAVCITEVIKLLLSVGILA). K55 contacts CMP-N-acetyl-beta-neuraminate. The Cytoplasmic segment spans residues 65–87 (KETGSLGRFKASLRENVLGSPKE). The chain crosses the membrane as a helical span at residues 88–108 (LLKLSVPSLVYAVQNNMAFLA). A CMP-N-acetyl-beta-neuraminate-binding site is contributed by 101–102 (QN). The Lumenal segment spans residues 109–114 (LSNLDA). The chain crosses the membrane as a helical span at residues 115–135 (AVYQVTYQLKIPCTALCTVLM). 117 to 124 (YQVTYQLK) serves as a coordination point for CMP-N-acetyl-beta-neuraminate. Over 136 to 141 (LNRTLS) the chain is Cytoplasmic. A helical membrane pass occupies residues 142–160 (KLQWVSVFMLCAGVTLVQW). Residues 161–175 (KPAQATKVVVEQNPL) lie on the Lumenal side of the membrane. Residues 176–196 (LGFGAIAIAVLCSGFAGVYFE) traverse the membrane as a helical segment. S188 contacts CMP-N-acetyl-beta-neuraminate. At 197-209 (KVLKSSDTSLWVR) the chain is on the cytoplasmic side. 210 to 214 (NIQMY) serves as a coordination point for CMP-N-acetyl-beta-neuraminate. The helical transmembrane segment at 210 to 228 (NIQMYLSGIIVTLAGVYLS) threads the bilayer. Topologically, residues 229-243 (DGAEIKEKGFFYGYT) are lumenal. A helical transmembrane segment spans residues 244 to 262 (YYVWFVIFLASVGGLYTSV). Residues 263–269 (VVKYTDN) lie on the Cytoplasmic side of the membrane. A helical transmembrane segment spans residues 270-288 (IMKGFSAAAAIVLSTIASV). K272 is a CMP-N-acetyl-beta-neuraminate binding site. Residues 289–296 (MLFGLQIT) are Lumenal-facing. Residues 297–315 (LTFALGTLLVCVSIYLYGL) form a helical membrane-spanning segment. At 316 to 337 (PRQDTTSIQQGETASKERVIGV) the chain is on the cytoplasmic side. The tract at residues 316–337 (PRQDTTSIQQGETASKERVIGV) is disordered.

The protein belongs to the nucleotide-sugar transporter family. SLC35A subfamily. Monomer.

The protein resides in the golgi apparatus membrane. Its subcellular location is the golgi apparatus. The enzyme catalyses CMP-N-acetyl-beta-neuraminate(in) + CMP(out) = CMP-N-acetyl-beta-neuraminate(out) + CMP(in). The catalysed reaction is CMP-N-acetyl-beta-neuraminate(in) + AMP(out) = CMP-N-acetyl-beta-neuraminate(out) + AMP(in). It catalyses the reaction CDP-L-ribitol(in) + CDP(out) = CDP-L-ribitol(out) + CDP(in). It carries out the reaction UMP(out) + CMP-N-acetyl-beta-neuraminate(in) = UMP(in) + CMP-N-acetyl-beta-neuraminate(out). In terms of biological role, transports CMP-sialic acid from the cytosol into the Golgi apparatus, functioning as an antiporter that exchanges CMP-sialic acid for CMP. Binds both CMP-sialic acid and free CMP, but has higher affinity for free CMP. Also able to exchange CMP-sialic acid for AMP and UMP. Also mediates the transport of CDP-ribitol. The chain is CMP-sialic acid transporter from Homo sapiens (Human).